Here is a 435-residue protein sequence, read N- to C-terminus: Nicotinate phosphoribosyltransferase (435 aa).

H230 is subject to Phosphohistidine; by autocatalysis.

This sequence belongs to the NAPRTase family. Post-translationally, transiently phosphorylated on a His residue during the reaction cycle. Phosphorylation strongly increases the affinity for substrates and increases the rate of nicotinate D-ribonucleotide production. Dephosphorylation regenerates the low-affinity form of the enzyme, leading to product release.

The enzyme catalyses nicotinate + 5-phospho-alpha-D-ribose 1-diphosphate + ATP + H2O = nicotinate beta-D-ribonucleotide + ADP + phosphate + diphosphate. The protein operates within cofactor biosynthesis; NAD(+) biosynthesis; nicotinate D-ribonucleotide from nicotinate: step 1/1. In terms of biological role, catalyzes the synthesis of beta-nicotinate D-ribonucleotide from nicotinate and 5-phospho-D-ribose 1-phosphate at the expense of ATP. In Vibrio cholerae serotype O1 (strain ATCC 39541 / Classical Ogawa 395 / O395), this protein is Nicotinate phosphoribosyltransferase.